Reading from the N-terminus, the 463-residue chain is L-seryl-tRNA(Sec) selenium transferase (463 aa).

An N6-(pyridoxal phosphate)lysine modification is found at lysine 295.

This sequence belongs to the SelA family. As to quaternary structure, homodecamer; pentamer of dimers. Binds only one seryl-tRNA(Sec) per dimer. Requires pyridoxal 5'-phosphate as cofactor.

The protein resides in the cytoplasm. It catalyses the reaction L-seryl-tRNA(Sec) + selenophosphate + H(+) = L-selenocysteinyl-tRNA(Sec) + phosphate. The protein operates within aminoacyl-tRNA biosynthesis; selenocysteinyl-tRNA(Sec) biosynthesis; selenocysteinyl-tRNA(Sec) from L-seryl-tRNA(Sec) (bacterial route): step 1/1. Converts seryl-tRNA(Sec) to selenocysteinyl-tRNA(Sec) required for selenoprotein biosynthesis. This Escherichia fergusonii (strain ATCC 35469 / DSM 13698 / CCUG 18766 / IAM 14443 / JCM 21226 / LMG 7866 / NBRC 102419 / NCTC 12128 / CDC 0568-73) protein is L-seryl-tRNA(Sec) selenium transferase.